Consider the following 707-residue polypeptide: Translation initiation factor IF-2 (707 aa).

Positions 55-80 (LAEKPKEEKQKDQKNHEQEAQDKEEK) are enriched in basic and acidic residues. The disordered stretch occupies residues 55-88 (LAEKPKEEKQKDQKNHEQEAQDKEEKEIEEDSFY). Residues 209 to 378 (PRPPIVTVMG…LLVAEMEDLK (170 aa)) enclose the tr-type G domain. The interval 218 to 225 (GHVDHGKT) is G1. Residue 218–225 (GHVDHGKT) coordinates GTP. A G2 region spans residues 243-247 (GITQH). Residues 264-267 (DTPG) form a G3 region. GTP is bound by residues 264–268 (DTPGH) and 318–321 (NKID). Positions 318–321 (NKID) are G4. A G5 region spans residues 354-356 (SAK).

This sequence belongs to the TRAFAC class translation factor GTPase superfamily. Classic translation factor GTPase family. IF-2 subfamily.

The protein localises to the cytoplasm. Functionally, one of the essential components for the initiation of protein synthesis. Protects formylmethionyl-tRNA from spontaneous hydrolysis and promotes its binding to the 30S ribosomal subunits. Also involved in the hydrolysis of GTP during the formation of the 70S ribosomal complex. The sequence is that of Translation initiation factor IF-2 from Caldanaerobacter subterraneus subsp. tengcongensis (strain DSM 15242 / JCM 11007 / NBRC 100824 / MB4) (Thermoanaerobacter tengcongensis).